A 315-amino-acid chain; its full sequence is WD repeat domain-containing protein 83 (315 aa).

WD repeat units lie at residues 23 to 62, 65 to 104, 107 to 146, 151 to 188, 190 to 228, 231 to 272, and 275 to 313; these read CGQG…LLRT, GHGY…VVRK, GHAG…PEPV, EARD…LFSD, VGSP…LLGE, GHKN…LALA, and VGSG…AEDG.

Belongs to the WD repeat MORG1 family. Interacts with EGLN3/PHD3. Interacts with ERK signaling proteins MAP2K1/MEK1, MAP2K2/MEK2, LAMTOR3, ARAF/Raf-1, MAPK1/ERK2 and MAPK3/ERK1. Identified in the spliceosome C complex. Interacts with PARD6B and CRB3. Interacts strongly with GTP-bound RRAGA but not with inactive GDP-bound. Interacts with p62/SQSTM1.

It is found in the cytoplasm. Its subcellular location is the lysosome. The protein localises to the nucleus. In terms of biological role, molecular scaffold protein for various multimeric protein complexes. Acts as a module in the assembly of a multicomponent scaffold for the ERK pathway, linking ERK responses to specific agonists. At low concentrations it enhances ERK activation, whereas high concentrations lead to the inhibition of ERK activation. Also involved in response to hypoxia by acting as a negative regulator of HIF1A/HIF-1-alpha via its interaction with EGLN3/PHD3. May promote degradation of HIF1A. May act by recruiting signaling complexes to a specific upstream activator. May also be involved in pre-mRNA splicing. Participates in tight junction development by regulating apico-basal polarity, a key step in tissue development and organization. Mechanistically, regulates the translocation of PAR6-aPKC from the cytoplasm to the apical surface by acting as an adapter between PARD6B AND CRB3. Also acts as a negative regulator of mTORC1 under nutrient-rich conditions by binding to the active Rag GTPases to inhibit mTORC1 localization to the lysosome and phosphorylation of downstream targets. This facilitates constitutive basal autophagy during nutrient availability. In Homo sapiens (Human), this protein is WD repeat domain-containing protein 83 (WDR83).